A 155-amino-acid chain; its full sequence is Ribonuclease H (155 aa).

Positions 1–142 constitute an RNase H type-1 domain; it reads MLKQVEIFTD…CDELARAAAM (142 aa). Mg(2+)-binding residues include Asp-10, Glu-48, Asp-70, and Asp-134.

This sequence belongs to the RNase H family. As to quaternary structure, monomer. Mg(2+) is required as a cofactor.

It is found in the cytoplasm. It carries out the reaction Endonucleolytic cleavage to 5'-phosphomonoester.. Functionally, endonuclease that specifically degrades the RNA of RNA-DNA hybrids. The polypeptide is Ribonuclease H (Escherichia coli (strain 55989 / EAEC)).